Here is a 164-residue protein sequence, read N- to C-terminus: uncharacterized protein (164 aa).

The N-terminal 60 residues, 1-60 (MERSASVGVNDGRFGGNQFYSPSFSSSSSSSSMRHVNYSCGSCGYELNLSSTNRITSTIG), are a transit peptide targeting the chloroplast.

The protein resides in the plastid. The protein localises to the chloroplast. This is an uncharacterized protein from Arabidopsis thaliana (Mouse-ear cress).